The sequence spans 144 residues: MAEELKEKRELEVEEDNTKKDNSDKKSKVKRRRRNYDDLDAEVTKDEKSRKTKSGKSGKNGSDSESEVDDAKLDTMISLEDEQEDDLAEIDTSNIIVTGRRTRGKIIDYKKAAEELAAEGKISLDEDEDEDDEDAKEDDGEFDE.

A compositionally biased stretch (basic and acidic residues) spans 1–26; it reads MAEELKEKRELEVEEDNTKKDNSDKK. 2 disordered regions span residues 1 to 85 and 117 to 144; these read MAEE…EQED and AAEG…EFDE. Over residues 125-144 the composition is skewed to acidic residues; the sequence is DEDEDEDDEDAKEDDGEFDE.

This sequence belongs to the CHZ1 family. In terms of assembly, forms a heterotrimer with H2A.Z-H2B, stabilizing the association of the histone dimer. Also, with a lower affinity, forms a heterotrimer with H2A-H2B.

The protein resides in the nucleus. Its function is as follows. Forms a chaperone-bound H2A.Z-H2B complex that acts as a source for SWR1 complex-dependent H2A to H2A.Z histone replacement in chromatin. The chain is Histone H2A.Z-specific chaperone CHZ1 (CHZ1) from Vanderwaltozyma polyspora (strain ATCC 22028 / DSM 70294 / BCRC 21397 / CBS 2163 / NBRC 10782 / NRRL Y-8283 / UCD 57-17) (Kluyveromyces polysporus).